Reading from the N-terminus, the 215-residue chain is Probable nicotinate-nucleotide adenylyltransferase (215 aa).

Belongs to the NadD family.

The catalysed reaction is nicotinate beta-D-ribonucleotide + ATP + H(+) = deamido-NAD(+) + diphosphate. It participates in cofactor biosynthesis; NAD(+) biosynthesis; deamido-NAD(+) from nicotinate D-ribonucleotide: step 1/1. In terms of biological role, catalyzes the reversible adenylation of nicotinate mononucleotide (NaMN) to nicotinic acid adenine dinucleotide (NaAD). This is Probable nicotinate-nucleotide adenylyltransferase from Coxiella burnetii (strain RSA 331 / Henzerling II).